A 281-amino-acid polypeptide reads, in one-letter code: Acyl-[acyl-carrier-protein]--UDP-N-acetylglucosamine O-acyltransferase (281 aa).

This sequence belongs to the transferase hexapeptide repeat family. LpxA subfamily. As to quaternary structure, homotrimer.

The protein resides in the cytoplasm. The enzyme catalyses a (3R)-hydroxyacyl-[ACP] + UDP-N-acetyl-alpha-D-glucosamine = a UDP-3-O-[(3R)-3-hydroxyacyl]-N-acetyl-alpha-D-glucosamine + holo-[ACP]. Its pathway is glycolipid biosynthesis; lipid IV(A) biosynthesis; lipid IV(A) from (3R)-3-hydroxytetradecanoyl-[acyl-carrier-protein] and UDP-N-acetyl-alpha-D-glucosamine: step 1/6. Involved in the biosynthesis of lipid A, a phosphorylated glycolipid that anchors the lipopolysaccharide to the outer membrane of the cell. The chain is Acyl-[acyl-carrier-protein]--UDP-N-acetylglucosamine O-acyltransferase from Rickettsia bellii (strain OSU 85-389).